The following is a 490-amino-acid chain: Glutamyl-tRNA(Gln) amidotransferase subunit A (490 aa).

Residues Lys77 and Ser152 each act as charge relay system in the active site. Ser176 serves as the catalytic Acyl-ester intermediate.

The protein belongs to the amidase family. GatA subfamily. Heterotrimer of A, B and C subunits.

The catalysed reaction is L-glutamyl-tRNA(Gln) + L-glutamine + ATP + H2O = L-glutaminyl-tRNA(Gln) + L-glutamate + ADP + phosphate + H(+). Allows the formation of correctly charged Gln-tRNA(Gln) through the transamidation of misacylated Glu-tRNA(Gln) in organisms which lack glutaminyl-tRNA synthetase. The reaction takes place in the presence of glutamine and ATP through an activated gamma-phospho-Glu-tRNA(Gln). The protein is Glutamyl-tRNA(Gln) amidotransferase subunit A of Limosilactobacillus reuteri (strain DSM 20016) (Lactobacillus reuteri).